The primary structure comprises 369 residues: Protein-glutamate methylesterase/protein-glutamine glutaminase of group 3 operon (369 aa).

Residues 11-128 (RVLIVDDSAA…DLERQEASIR (118 aa)) enclose the Response regulatory domain. D62 is subject to 4-aspartylphosphate. The tract at residues 136-168 (ATETTRRRSQPEPRPLAPGPKLTADEILPARPP) is disordered. Residues 170-358 (PVPETMPVVC…LDRLAARIME (189 aa)) form the CheB-type methylesterase domain. Catalysis depends on residues S183, H209, and D305.

It belongs to the CheB family. Phosphorylated in vitro by CheA2, but not by CheA1. Phosphorylation of the N-terminal regulatory domain activates the methylesterase activity.

It is found in the cytoplasm. It carries out the reaction [protein]-L-glutamate 5-O-methyl ester + H2O = L-glutamyl-[protein] + methanol + H(+). The enzyme catalyses L-glutaminyl-[protein] + H2O = L-glutamyl-[protein] + NH4(+). Functionally, involved in chemotaxis. Part of a chemotaxis signal transduction system that modulates chemotaxis in response to various stimuli. Catalyzes the demethylation of specific methylglutamate residues introduced into the chemoreceptors (methyl-accepting chemotaxis proteins or MCP) by CheR. Also mediates the irreversible deamidation of specific glutamine residues to glutamic acid. This chain is Protein-glutamate methylesterase/protein-glutamine glutaminase of group 3 operon (cheB3), found in Cereibacter sphaeroides (Rhodobacter sphaeroides).